We begin with the raw amino-acid sequence, 663 residues long: Transcriptional repressor CTCFL (663 aa).

Positions 24–51 (EKGLKEEEKDGVCREKDHRSPSELEAER) are enriched in basic and acidic residues. 2 disordered regions span residues 24–55 (EKGL…TSGA) and 221–250 (NSNV…QRKT). 10 consecutive C2H2-type zinc fingers follow at residues 257–279 (FHCD…MKTH), 285–307 (HLCH…VNTH), 313–336 (YKCN…RYKH), 342–364 (FKCS…VRSH), 370–392 (FQCC…MRTH), 398–421 (YECH…LQKH), 428–451 (YQCP…RNLH), 458–480 (LKCR…QKTH), 486–508 (FKCK…IRTH), and 514–537 (FTCL…RKYH). The C2H2-type 11; atypical zinc-finger motif lies at 546 to 568 (YKCSKCGKGFSRWINLHRHSEKC). The tract at residues 569–630 (GSGEAKSAAS…STTKGEQFPG (62 aa)) is disordered. Positions 580–590 (KGRRTRKRKQT) are enriched in basic residues. Residues 594-607 (EATKGQKEAAKGWK) are compositionally biased toward basic and acidic residues. Over residues 608-620 (EAANGDEAAAEEA) the composition is skewed to low complexity.

The protein belongs to the CTCF zinc-finger protein family. As to quaternary structure, interacts with histones, PRMT7 and SETD1A. Interacts (via N-terminus) with BAG6/BAT3. Testis specific. Specifically expressed in primary spermatocytes.

The protein localises to the cytoplasm. The protein resides in the nucleus. Its function is as follows. Testis-specific DNA binding protein responsible for insulator function, nuclear architecture and transcriptional control, which probably acts by recruiting epigenetic chromatin modifiers. Plays a key role in gene imprinting in male germline, by participating in the establishment of differential methylation at the IGF2/H19 imprinted control region (ICR). Directly binds the unmethylated H19 ICR and recruits the PRMT7 methyltransferase, leading to methylate histone H4 'Arg-3' to form H4R3sme2. This probably leads to recruit de novo DNA methyltransferases at these sites. Seems to act as tumor suppressor. In association with DNMT1 and DNMT3B, involved in activation of BAG1 gene expression by binding to its promoter. Required for dimethylation of H3 lysine 4 (H3K4me2) of MYC and BRCA1 promoters. In Homo sapiens (Human), this protein is Transcriptional repressor CTCFL (CTCFL).